The chain runs to 961 residues: DNA repair endonuclease XPF (961 aa).

Disordered stretches follow at residues 1–27, 451–485, and 674–693; these read MADSCAENAAKGTENERPKEVEASADT, NYAKESQTRSAPPKNVSSNKELRREEVSGSQPPLA, and PTDENAKSRQAGGQAPQATK. A compositionally biased stretch (basic and acidic residues) spans 13-22; it reads TENERPKEVE. Residues 458-469 show a composition bias toward polar residues; it reads TRSAPPKNVSSN. Residues 697 to 777 form the ERCC4 domain; that stretch reads KVIVDMREFR…KPILLIEFDQ (81 aa).

Belongs to the XPF family. As to quaternary structure, heterodimer. Interacts with hdm.

It localises to the nucleus. Functionally, implicated in recombination events during meiosis, mostly in meiotic exchange. May directly resolve Holliday junctions within recombination intermediates leading to DNA exchange. Also required for the repair of mismatches within meiotic heteroduplex DNA and for nucleotide excision repair. The protein is DNA repair endonuclease XPF (mei-9) of Drosophila melanogaster (Fruit fly).